Consider the following 473-residue polypeptide: Flavin-dependent L-tryptophan oxidase RebO (473 aa).

The signal sequence occupies residues 1 to 21 (MSRGHKKITVLGAGVAGLVAA). FAD is bound by residues 15–16 (VA), 35–36 (EG), Arg43, 61–64 (GAMR), Glu444, and 451–456 (AWIDGA).

Belongs to the flavin monoamine oxidase family. RebO subfamily. Homodimer. FAD serves as cofactor.

It carries out the reaction 7-chloro-L-tryptophan + O2 = 3-(7-chloroindol-3-yl)-2-iminopropanoate + H2O2. The catalysed reaction is L-tryptophan + O2 = 2-iminio-3-(indol-3-yl)propanoate + H2O2. Involved in the biosynthesis of the indolocarbazole antitumor agent rebeccamycin. It generates the imine form of 7-chloroindole 3-pyruvate (7Cl-IPA) from 7-chloro-L-tryptophan (7Cl-Trp), with concomitant two-electron reduction of O(2) to H(2)O(2). The enzyme is also active with L-tryptophan as substrate. This is Flavin-dependent L-tryptophan oxidase RebO (rebO) from Lentzea aerocolonigenes (Lechevalieria aerocolonigenes).